A 214-amino-acid polypeptide reads, in one-letter code: N-(5'-phosphoribosyl)anthranilate isomerase (214 aa).

The protein belongs to the TrpF family.

The catalysed reaction is N-(5-phospho-beta-D-ribosyl)anthranilate = 1-(2-carboxyphenylamino)-1-deoxy-D-ribulose 5-phosphate. It participates in amino-acid biosynthesis; L-tryptophan biosynthesis; L-tryptophan from chorismate: step 3/5. The polypeptide is N-(5'-phosphoribosyl)anthranilate isomerase (Halorubrum lacusprofundi (strain ATCC 49239 / DSM 5036 / JCM 8891 / ACAM 34)).